The primary structure comprises 25 residues: Caerin-1.4 (25 aa).

Leucine amide is present on leucine 25.

The protein belongs to the frog skin active peptide (FSAP) family. Caerin subfamily. Expressed by the skin parotoid and/or rostral glands.

It localises to the secreted. Antibacterial peptide, that adopts an alpha helical conformation which can disrupt bacterial membranes. Each caerin displays a different antimicrobial specificity. This Ranoidea caerulea (Green tree frog) protein is Caerin-1.4.